A 242-amino-acid chain; its full sequence is Dickkopf-like protein 1 (242 aa).

Residues 1–30 form the signal peptide; sequence MGEASPPAPARRHLLVLLLLLSTLVIPSAA. N-linked (GlcNAc...) asparagine glycans are attached at residues Asn-97 and Asn-112.

Interacts with SLXL1; Co-localize in seminiferous tubules. Interacts with SLY. N-glycosylated during spermatogenesis. Not N-glycosylated in mature sperm. In terms of tissue distribution, more highly expressed in adult testis than in fetal testis. Exclusively expressed in the testis (at protein level). Intense expression in stages II, III and IV of spermatogenesis, whereas expression is lower in stage I.

It localises to the secreted. The protein resides in the cytoplasmic vesicle. The protein localises to the secretory vesicle. It is found in the acrosome. In terms of biological role, involved in fertilization by facilitating sperm penetration of the zona pellucida. May promote spermatocyte apoptosis, thereby limiting sperm production. In adults, may reduce testosterone synthesis in Leydig cells. Is not essential either for development or fertility. The sequence is that of Dickkopf-like protein 1 from Homo sapiens (Human).